The sequence spans 240 residues: Uridylate kinase (240 aa).

Residue Lys12–Gly15 participates in ATP binding. The segment at Gly20–Gly25 is involved in allosteric activation by GTP. Gly54 lines the UMP pocket. Residues Gly55 and Arg59 each coordinate ATP. Residues Asp74 and Thr135 to Thr142 contribute to the UMP site. Residues Asn163, Tyr169, and Asp172 each contribute to the ATP site.

Belongs to the UMP kinase family. Homohexamer.

The protein localises to the cytoplasm. The enzyme catalyses UMP + ATP = UDP + ADP. It functions in the pathway pyrimidine metabolism; CTP biosynthesis via de novo pathway; UDP from UMP (UMPK route): step 1/1. Allosterically activated by GTP. Inhibited by UTP. Functionally, catalyzes the reversible phosphorylation of UMP to UDP. The polypeptide is Uridylate kinase (Geobacillus thermodenitrificans (strain NG80-2)).